Here is a 750-residue protein sequence, read N- to C-terminus: Protein O-mannosyl-transferase 2 (750 aa).

A disordered region spans residues 1–23 (MPPATGGGLAESELRPRRGRCGP). A Phosphoserine modification is found at Ser-41. The chain crosses the membrane as a helical span at residues 54 to 74 (AVGWWALLALVTLLSFATRFH). Asn-98 carries N-linked (GlcNAc...) asparagine glycosylation. The next 5 helical transmembrane spans lie at 100 to 120 (TFFF…AGYL), 146 to 166 (GFCA…VLDL), 191 to 211 (QYIL…LSMV), 231 to 251 (LTGV…FIIL), and 283 to 303 (VLCL…VHFM). Asn-330 carries an N-linked (GlcNAc...) asparagine glycan. MIR domains follow at residues 334 to 390 (PEHL…IKKH), 403 to 459 (VEFV…IEVV), and 464 to 521 (GNRI…VEDH). Asn-445 is a glycosylation site (N-linked (GlcNAc...) asparagine). Residues Asn-528 and Asn-583 are each glycosylated (N-linked (GlcNAc...) asparagine). 4 consecutive transmembrane segments (helical) span residues 596–616 (VVWW…SIIA), 643–663 (VLLG…VLYF), 665–685 (HYFP…DTLL), and 700–720 (GIHV…FYLF).

The protein belongs to the glycosyltransferase 39 family. As to quaternary structure, interacts with POMT1. N-glycosylated. In terms of tissue distribution, highly expressed in testis; detected at low levels in most tissues.

It is found in the endoplasmic reticulum membrane. The catalysed reaction is a di-trans,poly-cis-dolichyl beta-D-mannosyl phosphate + L-seryl-[protein] = 3-O-(alpha-D-mannosyl)-L-seryl-[protein] + a di-trans,poly-cis-dolichyl phosphate + H(+). It catalyses the reaction a di-trans,poly-cis-dolichyl beta-D-mannosyl phosphate + L-threonyl-[protein] = 3-O-(alpha-D-mannosyl)-L-threonyl-[protein] + a di-trans,poly-cis-dolichyl phosphate + H(+). Its pathway is protein modification; protein glycosylation. Its activity is regulated as follows. Slightly activated by Mg(2+) and inhibited by both Ca(+) and Mn(2+). EDTA ha no effect on activity in vitro. Transfers mannosyl residues to the hydroxyl group of serine or threonine residues. Coexpression of both POMT1 and POMT2 is necessary for enzyme activity, expression of either POMT1 or POMT2 alone is insufficient. Essentially dedicated to O-mannosylation of alpha-DAG1 and few other proteins but not of cadherins and protocaherins. The sequence is that of Protein O-mannosyl-transferase 2 (POMT2) from Homo sapiens (Human).